Consider the following 171-residue polypeptide: Co-chaperone protein HscB homolog (171 aa).

In terms of domain architecture, J spans 2–74; that stretch reads NHFELFGLPS…ISRAEYILAE (73 aa).

The protein belongs to the HscB family. Interacts with HscA and stimulates its ATPase activity.

In terms of biological role, co-chaperone involved in the maturation of iron-sulfur cluster-containing proteins. Seems to help targeting proteins to be folded toward HscA. The protein is Co-chaperone protein HscB homolog of Vibrio campbellii (strain ATCC BAA-1116).